A 380-amino-acid polypeptide reads, in one-letter code: MIVKRLNPDALKNALQKIGPEKIAQDRMHQKGVSFVFEIQHLPLSATLILKQEAISVGGDFATPRDCILAKEPFYDGVLIASAKQLERLIVKCHSQPFGLKHLAQELKSHLKAPKPNTPQIMAVLNLTPDSFYEKSRFDSKKALEEIYQWLEKGITLIDIGAASSRPESEIIDPKIEQDRLKEILLEIKSQKLYQCAKFSIDTYHATTAQMALEHYFSILNDVSGFNSAEMLEVAKDYKPTCILMHTQKTPKDMQENVFYHNLFDEMDRFFKEKLEVLEKYVLQDIILDIGFGFAKLKEHNLALIKHLSHFLKFKKPLLVGASRKNTIGLITGREVQDRLAGTLSLHLMALQNGASVLRVHDIDEHIDLIKVFKSLEETD.

The interval M1–A104 is dihydropteroate reductase. The tract at residues Q105–D380 is dihydropteroate synthase. A Pterin-binding domain is found at P119–K371. N126 provides a ligand contact to Mg(2+). (7,8-dihydropterin-6-yl)methyl diphosphate-binding positions include D202, N221, D289, K325, and R359–H361.

This sequence in the C-terminal section; belongs to the DHPS family. Requires FAD as cofactor. FMN serves as cofactor. Mg(2+) is required as a cofactor.

The enzyme catalyses (7,8-dihydropterin-6-yl)methyl diphosphate + 4-aminobenzoate = 7,8-dihydropteroate + diphosphate. It catalyses the reaction (6S)-5,6,7,8-tetrahydropteroate + NAD(+) = 7,8-dihydropteroate + NADH + H(+). It functions in the pathway cofactor biosynthesis; tetrahydrofolate biosynthesis; 7,8-dihydrofolate from 2-amino-4-hydroxy-6-hydroxymethyl-7,8-dihydropteridine diphosphate and 4-aminobenzoate: step 1/2. In terms of biological role, bifunctional enzyme that catalyzes the formation of dihydropteroate, the immediate precursor of folic acid and the reduction of dihydropteroate to tetrahydropteroate. The polypeptide is Bifunctional dihydropteroate synthase/dihydropteroate reductase (Helicobacter pylori (strain ATCC 700392 / 26695) (Campylobacter pylori)).